We begin with the raw amino-acid sequence, 246 residues long: DNA repair protein RecO (246 aa).

It belongs to the RecO family.

Involved in DNA repair and RecF pathway recombination. This chain is DNA repair protein RecO, found in Maridesulfovibrio salexigens (strain ATCC 14822 / DSM 2638 / NCIMB 8403 / VKM B-1763) (Desulfovibrio salexigens).